Consider the following 572-residue polypeptide: MRSDIVKKGYQRAPHRSLLRATGLKDEDFNKPFIGIANSYIDIIPGHFFLNRYAQIIKEEIRAAGGVPFEFNTIGVDDGIAMGHSGMLYSLPSRELIADSIETMMNAHSLDAMICIPNCDKIVPGMLMGALRVNVPTIFVSGGPMKAGKLEDGTILDLNSAFEAVGAFAEGKISEKRLHEIECNACPGGGSCSGMFTANSMNTLCEAMGVALPGNGTILALSKEREELLRKAARRIVEIALDERKTEQFRFRNILNKKAVHNAFVVDMAMGGSTNTILHMLAIAKEAEVDFNLDSINAIASQVAHIAKIAPALSTIHMEDINRAGGVSAVMNEVAKRNASLGSHSADSILYLDALTITGETLGERIANAQIVDSSVIRHNENAYSPVGGLKILYGNLAREGAVLKVAAVAESMKEFEGSAVCFNSQEEAIKGIAGGKVKAGNVVVIRYEGPKGGPGMQEMLTPTSLIMGMGLGESVALITDGRFSGATRGGCIGHISPEAAEGGLIALIEDGDKIAISVSKGTLELLVDSKIIESRRTQWKPIKKEIKSKWLKRYSLLVSNAANGAVLKTEI.

Mg(2+) is bound at residue Asp78. [2Fe-2S] cluster is bound at residue Cys119. Positions 120 and 121 each coordinate Mg(2+). The residue at position 121 (Lys121) is an N6-carboxylysine. Cys192 provides a ligand contact to [2Fe-2S] cluster. Glu459 contacts Mg(2+). Catalysis depends on Ser485, which acts as the Proton acceptor.

It belongs to the IlvD/Edd family. In terms of assembly, homodimer. It depends on [2Fe-2S] cluster as a cofactor. The cofactor is Mg(2+).

The catalysed reaction is (2R)-2,3-dihydroxy-3-methylbutanoate = 3-methyl-2-oxobutanoate + H2O. The enzyme catalyses (2R,3R)-2,3-dihydroxy-3-methylpentanoate = (S)-3-methyl-2-oxopentanoate + H2O. It functions in the pathway amino-acid biosynthesis; L-isoleucine biosynthesis; L-isoleucine from 2-oxobutanoate: step 3/4. It participates in amino-acid biosynthesis; L-valine biosynthesis; L-valine from pyruvate: step 3/4. Its function is as follows. Functions in the biosynthesis of branched-chain amino acids. Catalyzes the dehydration of (2R,3R)-2,3-dihydroxy-3-methylpentanoate (2,3-dihydroxy-3-methylvalerate) into 2-oxo-3-methylpentanoate (2-oxo-3-methylvalerate) and of (2R)-2,3-dihydroxy-3-methylbutanoate (2,3-dihydroxyisovalerate) into 2-oxo-3-methylbutanoate (2-oxoisovalerate), the penultimate precursor to L-isoleucine and L-valine, respectively. In Helicobacter hepaticus (strain ATCC 51449 / 3B1), this protein is Dihydroxy-acid dehydratase.